The sequence spans 240 residues: Transmembrane emp24 domain-containing protein 6 (240 aa).

The first 21 residues, M1–S21, serve as a signal peptide directing secretion. The Lumenal segment spans residues Q22 to Y200. Residues T53–V138 form the GOLD domain. N-linked (GlcNAc...) asparagine glycosylation is found at N107 and N156. Residues V201–L223 form a helical membrane-spanning segment. Over K224 to C240 the chain is Cytoplasmic.

This sequence belongs to the EMP24/GP25L family.

It localises to the endoplasmic reticulum membrane. This Bos taurus (Bovine) protein is Transmembrane emp24 domain-containing protein 6 (TMED6).